We begin with the raw amino-acid sequence, 143 residues long: Transcriptional regulator MraZ (143 aa).

2 SpoVT-AbrB domains span residues 5 to 47 (EYSH…PQKE) and 76 to 119 (AAEC…SQEL).

It belongs to the MraZ family. Forms oligomers.

Its subcellular location is the cytoplasm. It localises to the nucleoid. The polypeptide is Transcriptional regulator MraZ (Carboxydothermus hydrogenoformans (strain ATCC BAA-161 / DSM 6008 / Z-2901)).